The following is a 261-amino-acid chain: Proteasome subunit alpha type-4 (261 aa).

A phosphoserine mark is found at S13 and S75. N6-acetyllysine is present on K127. S173 is subject to Phosphoserine. An N6-acetyllysine modification is found at K176. Residues 240 to 261 (HEEEEAKAEREKKEKEQKEKDK) form a disordered region.

It belongs to the peptidase T1A family. As to quaternary structure, the 26S proteasome consists of a 20S proteasome core and two 19S regulatory subunits. The 20S proteasome core is a barrel-shaped complex made of 28 subunits that are arranged in four stacked rings. The two outer rings are each formed by seven alpha subunits, and the two inner rings are formed by seven beta subunits. The proteolytic activity is exerted by three beta-subunits PSMB5, PSMB6 and PSMB7.

It localises to the cytoplasm. Its subcellular location is the nucleus. Functionally, component of the 20S core proteasome complex involved in the proteolytic degradation of most intracellular proteins. This complex plays numerous essential roles within the cell by associating with different regulatory particles. Associated with two 19S regulatory particles, forms the 26S proteasome and thus participates in the ATP-dependent degradation of ubiquitinated proteins. The 26S proteasome plays a key role in the maintenance of protein homeostasis by removing misfolded or damaged proteins that could impair cellular functions, and by removing proteins whose functions are no longer required. Associated with the PA200 or PA28, the 20S proteasome mediates ubiquitin-independent protein degradation. This type of proteolysis is required in several pathways including spermatogenesis (20S-PA200 complex) or generation of a subset of MHC class I-presented antigenic peptides (20S-PA28 complex). The sequence is that of Proteasome subunit alpha type-4 (PSMA4) from Bos taurus (Bovine).